A 235-amino-acid chain; its full sequence is Aspartate/glutamate leucyltransferase (235 aa).

This sequence belongs to the R-transferase family. Bpt subfamily.

It is found in the cytoplasm. It catalyses the reaction N-terminal L-glutamyl-[protein] + L-leucyl-tRNA(Leu) = N-terminal L-leucyl-L-glutamyl-[protein] + tRNA(Leu) + H(+). It carries out the reaction N-terminal L-aspartyl-[protein] + L-leucyl-tRNA(Leu) = N-terminal L-leucyl-L-aspartyl-[protein] + tRNA(Leu) + H(+). In terms of biological role, functions in the N-end rule pathway of protein degradation where it conjugates Leu from its aminoacyl-tRNA to the N-termini of proteins containing an N-terminal aspartate or glutamate. The chain is Aspartate/glutamate leucyltransferase from Stutzerimonas stutzeri (strain A1501) (Pseudomonas stutzeri).